The following is an 89-amino-acid chain: Small ribosomal subunit protein uS15 (89 aa).

Belongs to the universal ribosomal protein uS15 family. Part of the 30S ribosomal subunit. Forms a bridge to the 50S subunit in the 70S ribosome, contacting the 23S rRNA.

Functionally, one of the primary rRNA binding proteins, it binds directly to 16S rRNA where it helps nucleate assembly of the platform of the 30S subunit by binding and bridging several RNA helices of the 16S rRNA. In terms of biological role, forms an intersubunit bridge (bridge B4) with the 23S rRNA of the 50S subunit in the ribosome. In Klebsiella pneumoniae subsp. pneumoniae (strain ATCC 700721 / MGH 78578), this protein is Small ribosomal subunit protein uS15.